We begin with the raw amino-acid sequence, 470 residues long: Homogentisate 1,2-dioxygenase (470 aa).

Fe cation contacts are provided by histidine 356, glutamate 362, and histidine 392.

Belongs to the homogentisate dioxygenase family. The cofactor is Fe cation.

The enzyme catalyses homogentisate + O2 = 4-maleylacetoacetate + H(+). Its pathway is amino-acid degradation; L-phenylalanine degradation; acetoacetate and fumarate from L-phenylalanine: step 4/6. The polypeptide is Homogentisate 1,2-dioxygenase (HGO) (Oryza sativa subsp. japonica (Rice)).